A 103-amino-acid chain; its full sequence is uncharacterized protein (103 aa).

This is an uncharacterized protein from Acanthamoeba polyphaga mimivirus (APMV).